A 79-amino-acid polypeptide reads, in one-letter code: MLGSKGLSPTDLRGMTDDHLRVELKNAKEEVFKLRFQSATGQLAHNARLRAVRRDIARIYTVMRERDIGIRSVQEEVSQ.

Belongs to the universal ribosomal protein uL29 family.

This Tropheryma whipplei (strain Twist) (Whipple's bacillus) protein is Large ribosomal subunit protein uL29.